We begin with the raw amino-acid sequence, 332 residues long: Phosphate acyltransferase (332 aa).

Belongs to the PlsX family. In terms of assembly, homodimer. Probably interacts with PlsY.

Its subcellular location is the cytoplasm. It catalyses the reaction a fatty acyl-[ACP] + phosphate = an acyl phosphate + holo-[ACP]. Its pathway is lipid metabolism; phospholipid metabolism. In terms of biological role, catalyzes the reversible formation of acyl-phosphate (acyl-PO(4)) from acyl-[acyl-carrier-protein] (acyl-ACP). This enzyme utilizes acyl-ACP as fatty acyl donor, but not acyl-CoA. In Streptococcus sanguinis (strain SK36), this protein is Phosphate acyltransferase.